The following is a 522-amino-acid chain: Putative thymidine phosphorylase (522 aa).

Belongs to the thymidine/pyrimidine-nucleoside phosphorylase family. Type 2 subfamily.

The catalysed reaction is thymidine + phosphate = 2-deoxy-alpha-D-ribose 1-phosphate + thymine. The chain is Putative thymidine phosphorylase from Albidiferax ferrireducens (strain ATCC BAA-621 / DSM 15236 / T118) (Rhodoferax ferrireducens).